Consider the following 243-residue polypeptide: Ribonuclease PH (243 aa).

Phosphate contacts are provided by residues Arg84 and 122–124 (GTR).

It belongs to the RNase PH family. Homohexameric ring arranged as a trimer of dimers.

It catalyses the reaction tRNA(n+1) + phosphate = tRNA(n) + a ribonucleoside 5'-diphosphate. Its function is as follows. Phosphorolytic 3'-5' exoribonuclease that plays an important role in tRNA 3'-end maturation. Removes nucleotide residues following the 3'-CCA terminus of tRNAs; can also add nucleotides to the ends of RNA molecules by using nucleoside diphosphates as substrates, but this may not be physiologically important. Probably plays a role in initiation of 16S rRNA degradation (leading to ribosome degradation) during starvation. This is Ribonuclease PH from Bdellovibrio bacteriovorus (strain ATCC 15356 / DSM 50701 / NCIMB 9529 / HD100).